The primary structure comprises 378 residues: Chorismate synthase (378 aa).

Residues 37–60 form a disordered region; that stretch reads EEEIQKDLTRRRPGQNDLTTPRDE. R47 is an NADP(+) binding site. FMN is bound by residues 124 to 126, G289, 304 to 308, and R330; these read RSS and KPTST.

It belongs to the chorismate synthase family. Homotetramer. FMNH2 serves as cofactor.

It carries out the reaction 5-O-(1-carboxyvinyl)-3-phosphoshikimate = chorismate + phosphate. The protein operates within metabolic intermediate biosynthesis; chorismate biosynthesis; chorismate from D-erythrose 4-phosphate and phosphoenolpyruvate: step 7/7. Functionally, catalyzes the anti-1,4-elimination of the C-3 phosphate and the C-6 proR hydrogen from 5-enolpyruvylshikimate-3-phosphate (EPSP) to yield chorismate, which is the branch point compound that serves as the starting substrate for the three terminal pathways of aromatic amino acid biosynthesis. This reaction introduces a second double bond into the aromatic ring system. The chain is Chorismate synthase from Leptospira biflexa serovar Patoc (strain Patoc 1 / Ames).